The primary structure comprises 484 residues: Aldehyde dehydrogenase family 3 member A2 (484 aa).

The Cytoplasmic portion of the chain corresponds to 1 to 463 (MERQVLRLRQ…FLLKQFNKGR (463 aa)). 185-190 (GNTAVG) contributes to the NAD(+) binding site. Catalysis depends on residues E207 and C241. S293 is modified (phosphoserine). Residues 464–484 (LGMLLFVCLVAVAAVIVKDQL) form a helical membrane-spanning segment. Residues 481–484 (KDQL) carry the Prevents secretion from ER motif.

The protein belongs to the aldehyde dehydrogenase family. Homodimer.

It is found in the membrane. Its subcellular location is the microsome membrane. It localises to the endoplasmic reticulum membrane. It carries out the reaction an aldehyde + NAD(+) + H2O = a carboxylate + NADH + 2 H(+). The enzyme catalyses a fatty aldehyde + NAD(+) + H2O = a fatty acid + NADH + 2 H(+). It catalyses the reaction hexadecanoate + NADH + 2 H(+) = hexadecanal + NAD(+) + H2O. The catalysed reaction is octanal + NAD(+) + H2O = octanoate + NADH + 2 H(+). It carries out the reaction (2E)-hexadecenal + NAD(+) + H2O = (E)-hexadec-2-enoate + NADH + 2 H(+). The enzyme catalyses 22-oxodocosanoate + NAD(+) + H2O = docosanedioate + NADH + 2 H(+). It catalyses the reaction 2,6,10,14-tetramethylpentadecanal + NAD(+) + H2O = 2,6,10,14-tetramethylpentadecanoate + NADH + 2 H(+). The catalysed reaction is octadecanal + NAD(+) + H2O = octadecanoate + NADH + 2 H(+). It carries out the reaction dodecanoate + NADH + 2 H(+) = dodecanal + NAD(+) + H2O. The enzyme catalyses decanal + NAD(+) + H2O = decanoate + NADH + 2 H(+). It catalyses the reaction tetradecanal + NAD(+) + H2O = tetradecanoate + NADH + 2 H(+). The catalysed reaction is heptanal + NAD(+) + H2O = heptanoate + NADH + 2 H(+). It carries out the reaction (2E,6E)-farnesal + NAD(+) + H2O = (2E,6E)-farnesoate + NADH + 2 H(+). Its function is as follows. Catalyzes the oxidation of medium and long-chain aliphatic aldehydes to fatty acids. Active on a variety of saturated and unsaturated aliphatic aldehydes between 6 and 24 carbons in length. Responsible for conversion of the sphingosine 1-phosphate (S1P) degradation product hexadecenal to hexadecenoic acid. This is Aldehyde dehydrogenase family 3 member A2 (Aldh3a2) from Mus musculus (Mouse).